The primary structure comprises 299 residues: 4-hydroxy-3-methylbut-2-enyl diphosphate reductase (299 aa).

C12 contacts [4Fe-4S] cluster. H42 and H88 together coordinate (2E)-4-hydroxy-3-methylbut-2-enyl diphosphate. Residues H42 and H88 each contribute to the dimethylallyl diphosphate site. Residues H42 and H88 each coordinate isopentenyl diphosphate. A [4Fe-4S] cluster-binding site is contributed by C110. (2E)-4-hydroxy-3-methylbut-2-enyl diphosphate is bound at residue H138. H138 lines the dimethylallyl diphosphate pocket. Residue H138 participates in isopentenyl diphosphate binding. The active-site Proton donor is E140. Residue T177 participates in (2E)-4-hydroxy-3-methylbut-2-enyl diphosphate binding. [4Fe-4S] cluster is bound at residue C205. (2E)-4-hydroxy-3-methylbut-2-enyl diphosphate contacts are provided by S233, N235, and S277. Dimethylallyl diphosphate is bound by residues S233, N235, and S277. Isopentenyl diphosphate is bound by residues S233, N235, and S277.

It belongs to the IspH family. [4Fe-4S] cluster is required as a cofactor.

It catalyses the reaction isopentenyl diphosphate + 2 oxidized [2Fe-2S]-[ferredoxin] + H2O = (2E)-4-hydroxy-3-methylbut-2-enyl diphosphate + 2 reduced [2Fe-2S]-[ferredoxin] + 2 H(+). It carries out the reaction dimethylallyl diphosphate + 2 oxidized [2Fe-2S]-[ferredoxin] + H2O = (2E)-4-hydroxy-3-methylbut-2-enyl diphosphate + 2 reduced [2Fe-2S]-[ferredoxin] + 2 H(+). Its pathway is isoprenoid biosynthesis; dimethylallyl diphosphate biosynthesis; dimethylallyl diphosphate from (2E)-4-hydroxy-3-methylbutenyl diphosphate: step 1/1. The protein operates within isoprenoid biosynthesis; isopentenyl diphosphate biosynthesis via DXP pathway; isopentenyl diphosphate from 1-deoxy-D-xylulose 5-phosphate: step 6/6. Its function is as follows. Catalyzes the conversion of 1-hydroxy-2-methyl-2-(E)-butenyl 4-diphosphate (HMBPP) into a mixture of isopentenyl diphosphate (IPP) and dimethylallyl diphosphate (DMAPP). Acts in the terminal step of the DOXP/MEP pathway for isoprenoid precursor biosynthesis. The protein is 4-hydroxy-3-methylbut-2-enyl diphosphate reductase of Malacoplasma penetrans (strain HF-2) (Mycoplasma penetrans).